Here is a 556-residue protein sequence, read N- to C-terminus: MSVSAFNRRWAAVILEALTRHGVRHICIAPGSRSTPLTLAAAENSTFIHHTHFDERGLGHLALGLAKVSKQPVAVIVTSGTAVANLYPALIEAGLTGEKLILLTADRPPELIDCGANQAIRQPGMFASHPTHSISLPRPTQDIPARWLVSTIDHALGTLHVGGVHINCPFAEPLYGEMDDTGLSWQQRLGDWWQDDKPWLREAPRLESEKQRDWFFWRQKRGVVVAGRMSAEEGKKVALWAQTLGWPLIGDVLSQTGQPLPCADLWLGNAKATSELQQAQIVVQLGSSLTGKRLLQWQASCEPEEYWIVDDIEGRLDPAHHRGRRLIANIADWLELHPAEKRQPWCVEIPRLAEQAMQAVIARRDAFGEAQLAHRICDYLPEQGQLFVGNSLVVRLIDALSQLPAGYPVYSNRGASGIDGLLSTAAGVQRASGKPTLAIVGDLSALYDLNALALLRQVSAPLVLIVVNNNGGQIFSLLPTPQSERERFYLMPQNVHFEHAAAMFELKYHRPQNWQELETAFADAWRTPTTTVIEMVVNDTDGAQTLQQLLAQVSHL.

Belongs to the TPP enzyme family. MenD subfamily. As to quaternary structure, homodimer. Requires Mg(2+) as cofactor. Mn(2+) is required as a cofactor. The cofactor is thiamine diphosphate.

It carries out the reaction isochorismate + 2-oxoglutarate + H(+) = 5-enolpyruvoyl-6-hydroxy-2-succinyl-cyclohex-3-ene-1-carboxylate + CO2. Its pathway is quinol/quinone metabolism; 1,4-dihydroxy-2-naphthoate biosynthesis; 1,4-dihydroxy-2-naphthoate from chorismate: step 2/7. It participates in quinol/quinone metabolism; menaquinone biosynthesis. Its function is as follows. Catalyzes the thiamine diphosphate-dependent decarboxylation of 2-oxoglutarate and the subsequent addition of the resulting succinic semialdehyde-thiamine pyrophosphate anion to isochorismate to yield 2-succinyl-5-enolpyruvyl-6-hydroxy-3-cyclohexene-1-carboxylate (SEPHCHC). This Escherichia coli O8 (strain IAI1) protein is 2-succinyl-5-enolpyruvyl-6-hydroxy-3-cyclohexene-1-carboxylate synthase.